A 391-amino-acid polypeptide reads, in one-letter code: Homocysteine-responsive endoplasmic reticulum-resident ubiquitin-like domain member 1 protein (391 aa).

M1 carries the post-translational modification N-acetylmethionine. Residues 1–263 (MESETEPEPV…VEEDDEINRD (263 aa)) are Cytoplasmic-facing. Residues 10–72 (VTLLVKSPNQ…LLDHQCLRDL (63 aa)) form the Ubiquitin-like domain. The segment at 100-126 (KVAESTEEPAGSNRGQYPEDSSSDGLR) is disordered. A compositionally biased stretch (polar residues) spans 112 to 124 (NRGQYPEDSSSDG). Residues 115–200 (QYPEDSSSDG…ASGAFVPPPS (86 aa)) are interaction with UBQLN1. Position 135 is a phosphoserine (S135). The interval 170 to 190 (LSWFQQIYARQYYMQYLAATA) is interaction with SYVN1. Residues 264-284 (WLDWTYSAATFSVFLSILYFY) form a helical membrane-spanning segment. Topologically, residues 285–289 (SSLSR) are lumenal. Residues 290–310 (FLMVMGATVVMYLHHVGWFPF) traverse the membrane as a helical segment. Residues 311 to 391 (RPRPVQNFPN…LPEGPPAIAN (81 aa)) lie on the Cytoplasmic side of the membrane. Residues 318-359 (FPNDGPPPDVVNQDPNNNLQEGTDPETEDPNHLPPDRDVLDG) form a disordered region. The span at 346–357 (DPNHLPPDRDVL) shows a compositional bias: basic and acidic residues.

Interacts with PSEN1 and PSEN2. Interacts with UBXN6. Interacts with UBQLN1, UBQLN2 and UBQLN4. Component of the HRD1 complex, which comprises at least SYNV1/HRD1, FAM8A1, HERPUD1/HERP, OS9, SEL1L and UBE2J1. FAM8A1 binding to SYNV1 may promote recruitment of HERPUD1 to the HRD1 complex. As to expression, widely expressed; in the brain, expression seems to be restricted to neurons and vascular smooth muscle cells. Present in activated microglia in senile plaques in the brain of patients with Alzheimer disease.

It localises to the endoplasmic reticulum membrane. In terms of biological role, component of the endoplasmic reticulum quality control (ERQC) system also called ER-associated degradation (ERAD) involved in ubiquitin-dependent degradation of misfolded endoplasmic reticulum proteins. Could enhance presenilin-mediated amyloid-beta protein 40 generation. Binds to ubiquilins and this interaction is required for efficient degradation of CD3D via the ERAD pathway. This chain is Homocysteine-responsive endoplasmic reticulum-resident ubiquitin-like domain member 1 protein (HERPUD1), found in Homo sapiens (Human).